Here is a 416-residue protein sequence, read N- to C-terminus: Phosphoglycerate kinase (416 aa).

Residues valine 23, aspartate 24, phenylalanine 25, asparagine 26, glutamine 38, arginine 39, serine 62, histidine 63, glycine 65, arginine 66, leucine 121, arginine 122, histidine 168, and arginine 169 each coordinate (2R)-3-phosphoglycerate. Glycine 212 is an ADP binding site. Glycine 212 lines the CDP pocket. The AMP site is built by alanine 213 and lysine 214. ATP is bound at residue alanine 213. Alanine 213 is a binding site for Mg(2+). Residue aspartate 217 participates in CDP binding. Aspartate 217 contacts Mg(2+). Lysine 218 provides a ligand contact to AMP. Lysine 218 contacts ATP. Position 236 (glycine 236) interacts with ADP. Glycine 236 lines the CDP pocket. Residues glycine 237 and glycine 311 each coordinate AMP. Residues glycine 237 and glycine 311 each coordinate ATP. Positions 336 and 341 each coordinate CDP. Phenylalanine 341 serves as a coordination point for ADP. An AMP-binding site is contributed by glutamate 342. ATP is bound by residues glutamate 342, aspartate 373, and threonine 374. Mg(2+) is bound at residue aspartate 373.

It belongs to the phosphoglycerate kinase family. Monomer. Mg(2+) is required as a cofactor.

It is found in the cytoplasm. The protein resides in the mitochondrion. The catalysed reaction is (2R)-3-phosphoglycerate + ATP = (2R)-3-phospho-glyceroyl phosphate + ADP. It functions in the pathway carbohydrate degradation; glycolysis; pyruvate from D-glyceraldehyde 3-phosphate: step 2/5. Functionally, catalyzes one of the two ATP producing reactions in the glycolytic pathway via the reversible conversion of 1,3-diphosphoglycerate to 3-phosphoglycerate. Both L- and D- forms of purine and pyrimidine nucleotides can be used as substrates, but the activity is much lower on pyrimidines. Negatively regulates the biosynthesis of acetyl-CoA from pyruvate in the mitochondrion. This is Phosphoglycerate kinase (PGK1) from Komagataella pastoris (Yeast).